The sequence spans 373 residues: Protein-glutamate methylesterase/protein-glutamine glutaminase 2 (373 aa).

Positions 4 to 121 constitute a Response regulatory domain; the sequence is KVLVVDDSGF…SRNPEKVKQL (118 aa). Residue Asp55 is modified to 4-aspartylphosphate. Residues 136–181 form a disordered region; the sequence is FSSYSAPAPQPASAPAPAPSSFASSRSPAPAPAPARAAAPAASANS. Residues 143-153 show a composition bias toward pro residues; sequence APQPASAPAPA. Over residues 154–181 the composition is skewed to low complexity; it reads PSSFASSRSPAPAPAPARAAAPAASANS. Positions 182–370 constitute a CheB-type methylesterase domain; the sequence is PAPKRKAYKL…LDDIGRHLVE (189 aa). Residues Ser197, His224, and Asp317 contribute to the active site.

This sequence belongs to the CheB family. Post-translationally, phosphorylated by CheA. Phosphorylation of the N-terminal regulatory domain activates the methylesterase activity.

It is found in the cytoplasm. The catalysed reaction is [protein]-L-glutamate 5-O-methyl ester + H2O = L-glutamyl-[protein] + methanol + H(+). It carries out the reaction L-glutaminyl-[protein] + H2O = L-glutamyl-[protein] + NH4(+). Its function is as follows. Involved in chemotaxis. Part of a chemotaxis signal transduction system that modulates chemotaxis in response to various stimuli. Catalyzes the demethylation of specific methylglutamate residues introduced into the chemoreceptors (methyl-accepting chemotaxis proteins or MCP) by CheR. Also mediates the irreversible deamidation of specific glutamine residues to glutamic acid. The sequence is that of Protein-glutamate methylesterase/protein-glutamine glutaminase 2 from Pseudomonas fluorescens (strain ATCC BAA-477 / NRRL B-23932 / Pf-5).